Reading from the N-terminus, the 902-residue chain is MPPASTSTTNDMITEEPTSPHQIPRLTRRLTGFLPQEIKSIDTMIPLKSRALWNKHQVKKFNKAEDFQDRFIDHVETTLARSLYNCDDMAAYEAASMSIRDNLVIDWNKTQQKFTTRDPKRVYYLSLEFLMGRALDNALINMKIEDPEDPAASKGKPREMIKGALDDLGFKLEDVLDQEPDAGLGNGGLGRLAACFVDSMATEGIPAWGYGLRYEYGIFAQKIIDGYQVETPDYWLNSGNPWEIERNEVQIPVTFYGYVDRPEGGKTTLSASQWIGGERVLAVAYDFPVPGFKTSNVNNLRLWQARPTTEFDFAKFNNGDYKNSVAQQQRAESITAVLYPNDNFAQGKELRLKQQYFWCAASLHDILRRFKKSKRPWTEFPDQVAIQLNDTHPTLAIVELQRVLVDLEKLDWHEAWDIVTKTFAYTNHTVMQEALEKWPVGLFGHLLPRHLEIIYDINWFFLQDVAKKFPKDVDLLSRISIIEENSPERQIRMAFLAIVGSHKVNGVAELHSELIKTTIFKDFVKFYGPSKFVNVTNGITPRRWLKQANPSLAKLISETLNDPTEEYLLDMAKLTQLGKYVEDKEFLKKWNQVKLNNKIRLVDLIKKENDGVDIINREYLDDTLFDMQVKRIHEYKRQQLNVFGIIYRYLAMKNMLKNGASIEEVAKKYPRKVSIFGGKSAPGYYMAKLIIKLINCVADIVNNDESIEHLLKVVFVADYNVSKAEIIIPASDLSEHISTAGTEASGTSNMKFVMNGGLIIGTVDGANVEITREIGEDNVFLFGNLSENVEELRYNHQYHPQDLPSSLDSVLSYIESGQFSPENPNEFKPLVDSIKYHGDYYLVSDDFESYLATHELVDQEFHNQRSEWLKKSVLSVANVGFFSSDRCIEEYSDTIWNVEPVT.

The disordered stretch occupies residues 1-21 (MPPASTSTTNDMITEEPTSPH). Threonine 31 is subject to Phosphothreonine. The residue at position 333 (serine 333) is a Phosphoserine. An N6-(pyridoxal phosphate)lysine modification is found at lysine 751.

Belongs to the glycogen phosphorylase family. In terms of assembly, homodimer. The cofactor is pyridoxal 5'-phosphate.

It localises to the cytoplasm. Its subcellular location is the cytosol. It carries out the reaction [(1-&gt;4)-alpha-D-glucosyl](n) + phosphate = [(1-&gt;4)-alpha-D-glucosyl](n-1) + alpha-D-glucose 1-phosphate. Activated by phosphorylation of Thr-31. Functionally, phosphorylase is an important allosteric enzyme in carbohydrate metabolism. Enzymes from different sources differ in their regulatory mechanisms and in their natural substrates. However, all known phosphorylases share catalytic and structural properties. This Saccharomyces cerevisiae (strain ATCC 204508 / S288c) (Baker's yeast) protein is Glycogen phosphorylase (GPH1).